We begin with the raw amino-acid sequence, 551 residues long: Cytochrome P450 monooxygenase abl5 (551 aa).

An N-linked (GlcNAc...) asparagine glycan is attached at Asn-24. Residues 37-57 (VVLNTLTAIVVVWICYRAVIY) traverse the membrane as a helical segment. Residues Asn-174, Asn-218, Asn-283, Asn-307, and Asn-441 are each glycosylated (N-linked (GlcNAc...) asparagine). A heme-binding site is contributed by Cys-495.

This sequence belongs to the cytochrome P450 family. Heme is required as a cofactor.

The protein resides in the membrane. Its function is as follows. Cytochrome P450 monooxygenase; part of the gene cluster that mediates the biosynthesis of abscisic acid (ABA), a phytohormone that acts antagonistically toward salicylic acid (SA), jasmonic acid (JA) and ethylene (ETH) signaling, to impede plant defense responses. The first step of the pathway catalyzes the reaction from farnesyl diphosphate to alpha-ionylideneethane performed by the alpha-ionylideneethane synthase abl3 via a three-step reaction mechanism involving 2 neutral intermediates, beta-farnesene and allofarnesene. The cytochrome P450 monooxygenase abl1 might then be involved in the conversion of alpha-ionylideneethane to alpha-ionylideneacetic acid. Alpha-ionylideneacetic acid is further converted to abscisic acid in 2 steps involving the cytochrome P450 monooxygenase abl2 and the short-chain dehydrogenase/reductase abl4, via the intermediates 1'-deoxy-ABA or 1',4'-trans-diol-ABA, depending on the order of action of these 2 enzymes. Abl2 is responsible for the hydroxylation of carbon atom C-1' and abl4 might be involved in the oxidation of the C-4' carbon atom. The cytochrome monooxygenase abl5 seems not essential for the biosynthesis of ABA and its function remains to be identified. The protein is Cytochrome P450 monooxygenase abl5 of Leptosphaeria maculans (strain JN3 / isolate v23.1.3 / race Av1-4-5-6-7-8) (Blackleg fungus).